The sequence spans 180 residues: MARLSAFNFKAWIDEHRHLLKPPVGNKMVYEDADLMVTVVGGPNKRTDYHDDPVEEFFYQLEGDMVLKLYDGEEFYDVPIREGEIFLLPPHMRHSPQRPQEGSVGLVIEAKRPEGAADAIEWYCFNCGNLVHRAELMLTSIVDDLPPVYQAFYASEEARTCGSCGEVHPGKEPPEGWVTL.

Arg46 serves as a coordination point for O2. Residues His50, Glu56, and His94 each coordinate Fe cation. Glu56 lines the substrate pocket. Substrate-binding residues include Arg98 and Glu109. Fe cation-binding residues include Cys124, Cys127, Cys161, and Cys164.

This sequence belongs to the 3-HAO family. In terms of assembly, homodimer. The cofactor is Fe(2+).

The catalysed reaction is 3-hydroxyanthranilate + O2 = (2Z,4Z)-2-amino-3-carboxymuconate 6-semialdehyde. Its pathway is cofactor biosynthesis; NAD(+) biosynthesis; quinolinate from L-kynurenine: step 3/3. Catalyzes the oxidative ring opening of 3-hydroxyanthranilate to 2-amino-3-carboxymuconate semialdehyde, which spontaneously cyclizes to quinolinate. The chain is 3-hydroxyanthranilate 3,4-dioxygenase from Jannaschia sp. (strain CCS1).